Reading from the N-terminus, the 104-residue chain is Nucleoid-associated protein jk2011 (104 aa).

It belongs to the YbaB/EbfC family. As to quaternary structure, homodimer.

It localises to the cytoplasm. The protein localises to the nucleoid. Its function is as follows. Binds to DNA and alters its conformation. May be involved in regulation of gene expression, nucleoid organization and DNA protection. The sequence is that of Nucleoid-associated protein jk2011 from Corynebacterium jeikeium (strain K411).